Consider the following 287-residue polypeptide: Glutamate racemase (287 aa).

Polar residues predominate over residues 1 to 15; that stretch reads MATKPQDANTTSREA. Residues 1 to 25 are disordered; the sequence is MATKPQDANTTSREAITSKADSPPR. Residues 32–33 and 64–65 each bind substrate; these read DS and YG. Cys96 serves as the catalytic Proton donor/acceptor. 97 to 98 provides a ligand contact to substrate; the sequence is NT. Cys208 functions as the Proton donor/acceptor in the catalytic mechanism. Residue 209–210 participates in substrate binding; sequence TH.

The protein belongs to the aspartate/glutamate racemases family.

The catalysed reaction is L-glutamate = D-glutamate. Its pathway is cell wall biogenesis; peptidoglycan biosynthesis. Its function is as follows. Provides the (R)-glutamate required for cell wall biosynthesis. In Yersinia pseudotuberculosis serotype O:3 (strain YPIII), this protein is Glutamate racemase.